The sequence spans 475 residues: FAD-dependent monooxygenase sdgC (475 aa).

An N-terminal signal peptide occupies residues 1–23 (MDKRSFKVIVVGGSIAGLTLAHS). 3 residues coordinate FAD: Glu-35, Gly-49, and Arg-126. Asn-236 carries an N-linked (GlcNAc...) asparagine glycan. Ala-330 is a binding site for FAD. The chain crosses the membrane as a helical span at residues 446–466 (ISGVLLLVIPIIALVYGYSVI).

The protein belongs to the paxM FAD-dependent monooxygenase family. Requires FAD as cofactor.

Its subcellular location is the membrane. It participates in secondary metabolite biosynthesis. In terms of biological role, FAD-dependent monooxygenase; part of the gene cluster that mediates the biosynthesis of the polyenes aspernidgulenes. The carbon backbone of aspernidgulenes is synthesized by the HR-PKS sdgA, which accepts acetyl-CoA as the starter unit and performs malonyl-CoA extensions as well as regioselective methylation and reduction. The resulting nonaketide offloads the HR-PKS by intramolecular lactonization to yield the 5,6-dihydro-alpha-pyrone-containing hexaenoic acids preaspernidgulene A1 and A2. The FAD-dependent monooxygenase sdgC then installs the first epoxide on the penultimate double bond. Subsequently, the FAD-dependent monooxygenase sdgF presumably generates a ketone intermediate through Meinwald rearrangement involving a hydride shift. Next, sdgC introduces another epoxide on the last olefin of the ketone intermediate after E/Z isomerization. The epoxide hydrolase sdgD then catalyzes stereospecific cyclization of the 5,6-dihydro-alpha-pyrone and opening of the epoxide ring to form an oxygenated trimethylcyclopentanone and an oxabicyclo[2.2.1]heptane unit. Finally, the bicyclic unit undergoes hydrolytic cleavage, either spontaneously or catalyzed by sdgD, to assemble the dimethyl-gamma-lactone moiety in aspernidgulene A1. The sequence is that of FAD-dependent monooxygenase sdgC from Emericella nidulans (strain FGSC A4 / ATCC 38163 / CBS 112.46 / NRRL 194 / M139) (Aspergillus nidulans).